The primary structure comprises 556 residues: Glutamine--tRNA ligase (556 aa).

A 'HIGH' region motif is present at residues Pro34–His44. ATP contacts are provided by residues Glu35–Asn37 and His41–Ala47. Positions 67 and 212 each coordinate L-glutamine. ATP contacts are provided by residues Thr231, Arg261–Leu262, and Met269–Lys271. A 'KMSKS' region motif is present at residues Leu268–Arg272.

Belongs to the class-I aminoacyl-tRNA synthetase family. In terms of assembly, monomer.

Its subcellular location is the cytoplasm. The catalysed reaction is tRNA(Gln) + L-glutamine + ATP = L-glutaminyl-tRNA(Gln) + AMP + diphosphate. In Colwellia psychrerythraea (strain 34H / ATCC BAA-681) (Vibrio psychroerythus), this protein is Glutamine--tRNA ligase.